A 282-amino-acid chain; its full sequence is Protein Ku (282 aa).

In terms of domain architecture, Ku spans 9–189 (VNFGLVNVPV…KPELSEAELK (181 aa)).

In terms of assembly, homodimer. Interacts with host LigD, maybe via the LigD Pol domain.

Its function is as follows. Required for replication of viruses with short cos ends (4 bases). Stimulates dsDNA end-joining by host LigD; in conjunction with M.smegmatis or M.tuberculosis LigD can reconstitute NHEJ in S.cerevisiae. Binds dsDNA with either blunt, 5'- or 3-overhangs, protecting it from host exonuclease degradation. The protein is Protein Ku (206) of Mycobacterium phage Omega (Mycobacteriophage Omega).